The sequence spans 653 residues: Testicular spindle-associated protein SHCBP1L (653 aa).

The interval methionine 1 to threonine 65 is disordered. Serine 8 bears the Phosphoserine mark. Over residues serine 28–lysine 41 the composition is skewed to polar residues. Residues proline 46–proline 56 show a composition bias toward low complexity. At serine 53 the chain carries Phosphoserine. Residues isoleucine 299–glutamate 326 adopt a coiled-coil conformation. PbH1 repeat units lie at residues serine 493–threonine 514, glycine 515–proline 537, glycine 538–valine 571, and alanine 574–glutamine 596. Lysine 570 bears the N6-acetyllysine mark. An N6-acetyllysine modification is found at lysine 645.

As to quaternary structure, interacts with HSPA2; this interaction may promote the recruitment of HSPA2 to the spindle. Expressed in spermatocytes and elongating spermatids inside the seminiferous tubules (at protein level). Testis-specific.

Its subcellular location is the cytoplasm. It is found in the cytoskeleton. It localises to the spindle. Its function is as follows. Testis-specific spindle-associated factor that plays a role in spermatogenesis. In association with HSPA2, participates in the maintenance of spindle integrity during meiosis in male germ cells. This Homo sapiens (Human) protein is Testicular spindle-associated protein SHCBP1L.